A 435-amino-acid polypeptide reads, in one-letter code: tRNA modification GTPase MnmE (435 aa).

Residues Arg-24, Glu-82, and Lys-122 each coordinate (6S)-5-formyl-5,6,7,8-tetrahydrofolate. A TrmE-type G domain is found at 219 to 360 (GFIIAIAGPP…LIAEMERRLG (142 aa)). Asn-229 is a binding site for K(+). GTP is bound by residues 229–234 (NAGKST), 248–254 (SPVPGTT), and 273–276 (DTAG). Ser-233 serves as a coordination point for Mg(2+). Positions 248, 250, and 253 each coordinate K(+). A Mg(2+)-binding site is contributed by Thr-254. (6S)-5-formyl-5,6,7,8-tetrahydrofolate is bound at residue Lys-435.

It belongs to the TRAFAC class TrmE-Era-EngA-EngB-Septin-like GTPase superfamily. TrmE GTPase family. As to quaternary structure, homodimer. Heterotetramer of two MnmE and two MnmG subunits. The cofactor is K(+).

It is found in the cytoplasm. In terms of biological role, exhibits a very high intrinsic GTPase hydrolysis rate. Involved in the addition of a carboxymethylaminomethyl (cmnm) group at the wobble position (U34) of certain tRNAs, forming tRNA-cmnm(5)s(2)U34. This Azorhizobium caulinodans (strain ATCC 43989 / DSM 5975 / JCM 20966 / LMG 6465 / NBRC 14845 / NCIMB 13405 / ORS 571) protein is tRNA modification GTPase MnmE.